A 202-amino-acid polypeptide reads, in one-letter code: Imidazoleglycerol-phosphate dehydratase (202 aa).

The protein belongs to the imidazoleglycerol-phosphate dehydratase family.

The protein resides in the cytoplasm. The catalysed reaction is D-erythro-1-(imidazol-4-yl)glycerol 3-phosphate = 3-(imidazol-4-yl)-2-oxopropyl phosphate + H2O. The protein operates within amino-acid biosynthesis; L-histidine biosynthesis; L-histidine from 5-phospho-alpha-D-ribose 1-diphosphate: step 6/9. In Synechococcus sp. (strain WH7803), this protein is Imidazoleglycerol-phosphate dehydratase.